A 273-amino-acid chain; its full sequence is Serine acetyltransferase (273 aa).

Belongs to the transferase hexapeptide repeat family. Homohexamer. Dimer of a homotrimer.

It is found in the cytoplasm. The enzyme catalyses L-serine + acetyl-CoA = O-acetyl-L-serine + CoA. Its pathway is amino-acid biosynthesis; L-cysteine biosynthesis; L-cysteine from L-serine: step 1/2. The protein is Serine acetyltransferase (cysE) of Shigella flexneri.